We begin with the raw amino-acid sequence, 88 residues long: uncharacterized protein (88 aa).

Residues 1-31 are disordered; the sequence is MIPRDPRSPAPDLSAINQPAGRAERRSGPAT.

This is an uncharacterized protein from Escherichia coli.